The primary structure comprises 420 residues: Putative epoxide hydrolase (420 aa).

It belongs to the peptidase S33 family.

The protein operates within mycotoxin biosynthesis. Functionally, putative epoxide hydrolase; part of the fragmented gene cluster that mediates the biosynthesis of dothistromin (DOTH), a polyketide toxin very similar in structure to the aflatoxin precursor, versicolorin B. The first step of the pathway is the conversion of acetate to norsolorinic acid (NOR) and requires the fatty acid synthase subunits hexA and hexB, as well as the polyketide synthase pksA. PksA combines a hexanoyl starter unit and 7 malonyl-CoA extender units to synthesize the precursor NOR. The hexanoyl starter unit is provided to the acyl-carrier protein (ACP) domain by the fungal fatty acid synthase hexA/hexB. The second step is the conversion of NOR to averantin (AVN) and requires the norsolorinic acid ketoreductase nor1, which catalyzes the dehydration of norsolorinic acid to form (1'S)-averantin. The cytochrome P450 monooxygenase avnA then catalyzes the hydroxylation of AVN to 5'hydroxyaverantin (HAVN). The next step is performed by adhA that transforms HAVN to averufin (AVF). Averufin might then be converted to hydroxyversicolorone by cypX and avfA. Hydroxyversicolorone is further converted versiconal hemiacetal acetate (VHA) by moxY. VHA is then the substrate for the versiconal hemiacetal acetate esterase est1 to yield versiconal (VAL). Versicolorin B synthase vbsA then converts VAL to versicolorin B (VERB) by closing the bisfuran ring. Then, the activity of the versicolorin B desaturase verB leads to versicolorin A (VERA). DotB, a predicted chloroperoxidase, may perform epoxidation of the A-ring of VERA. Alternatively, a cytochrome P450, such as cypX or avnA could catalyze this step. It is also possible that another, uncharacterized, cytochrome P450 enzyme is responsible for this step. Opening of the epoxide could potentially be achieved by the epoxide hydrolase epoA. However, epoA seems not to be required for DOTH biosynthesis, but other epoxide hydrolases may have the ability to complement this hydrolysis. Alternatively, opening of the epoxide ring could be achieved non-enzymatically. The next step is the deoxygenation of ring A to yield the 5,8-dihydroxyanthraquinone which is most likely catalyzed by the NADPH dehydrogenase encoded by ver1. The last stages of DOTH biosynthesis are proposed to involve hydroxylation of the bisfuran. OrdB and norB might have oxidative roles here. An alternative possibility is that cytochrome P450 monoogenases such as avnA and cypX might perform these steps in addition to previously proposed steps. The protein is Putative epoxide hydrolase of Dothistroma septosporum (Red band needle blight fungus).